A 1107-amino-acid polypeptide reads, in one-letter code: Unconventional myosin-Ie (1107 aa).

The Myosin motor domain maps to 19–692 (SGVDDMVLLS…SLFLLEEMRE (674 aa)). 112–119 (GESGAGKT) lines the ATP pocket. Positions 581 to 591 (PHYIRCIKPNE) are actin-binding. The region spanning 695-724 (YDGYARVIQKTWRKFVARKKYVQMREEASD) is the IQ domain. The 193-residue stretch at 730 to 922 (KERRRNSINR…NKVLQVSIGP (193 aa)) folds into the TH1 domain. Residues 919-1052 (SIGPGLPKNS…KPQPKPKPQV (134 aa)) form a disordered region. 2 stretches are compositionally biased toward polar residues: residues 979–989 (NQRSNQKSLYT) and 998–1012 (RQQS…QTPE). Residue serine 1001 is modified to Phosphoserine. The span at 1034 to 1051 (RPPPAGGRPKPQPKPKPQ) shows a compositional bias: pro residues. The SH3 domain occupies 1050 to 1107 (PQVPQCKALYAYDAQDTDELSFNANDIIDIIKEDPSGWWTGRLRGKQGLFPNNYVTKI).

Belongs to the TRAFAC class myosin-kinesin ATPase superfamily. Myosin family. As to quaternary structure, interacts with CALM and F-actin. Interacts (via SH3 domain) with SYNJ1, DNM1 and DNM2. Interacts with ARL14EP. Interacts with CARMIL1. In terms of tissue distribution, detected in kidney glomeruli (at protein level). Detected in utricle.

Its subcellular location is the cytoplasm. It is found in the cell junction. It localises to the cytoplasmic vesicle. The protein resides in the clathrin-coated vesicle. The protein localises to the cytoskeleton. Functionally, myosins are actin-based motor molecules with ATPase activity. Unconventional myosins serve in intracellular movements. Their highly divergent tails bind to membranous compartments, which are then moved relative to actin filaments. Binds to membranes containing anionic phospholipids via its tail domain. Involved in clathrin-mediated endocytosis and intracellular movement of clathrin-coated vesicles. Required for normal morphology of the glomerular basement membrane, normal development of foot processes by kidney podocytes and normal kidney function. In dendritic cells, may control the movement of class II-containing cytoplasmic vesicles along the actin cytoskeleton by connecting them with the actin network via ARL14EP and ARL14. This chain is Unconventional myosin-Ie (Myo1e), found in Mus musculus (Mouse).